A 462-amino-acid chain; its full sequence is Glycoprotein endo-alpha-1,2-mannosidase (462 aa).

Residues 1–8 are Cytoplasmic-facing; it reads MAKFRRRT. The helical; Signal-anchor for type II membrane protein transmembrane segment at 9–29 threads the bilayer; it reads CIILALFILFIFSLMMGLKML. The Lumenal segment spans residues 30–462; the sequence is RPNTATFGAP…YALDRQLPVS (433 aa). Positions 60-462 are catalytic; it reads DFQKSDRINS…YALDRQLPVS (403 aa).

This sequence belongs to the glycosyl hydrolase 99 family. Post-translationally, undergoes proteolytic cleavage in the C-terminal region. In terms of tissue distribution, highly expressed in the liver and kidney. Expressed at lower levels in muscle, pancreas, heart, placenta, lung and brain.

The protein localises to the golgi apparatus membrane. It catalyses the reaction N-{alpha-Glc-(1-&gt;3)-alpha-Man-(1-&gt;2)-alpha-Man-(1-&gt;2)-alpha-Man-(1-&gt;3)-[alpha-Man-(1-&gt;2)-alpha-Man-(1-&gt;3)-[alpha-Man-(1-&gt;2)-alpha-Man-(1-&gt;6)]-alpha-Man-(1-&gt;6)]-beta-Man-(1-&gt;4)-beta-GlcNAc-(1-&gt;4)-beta-GlcNAc}-L-asparaginyl-[protein] + H2O = alpha-D-glucosyl-(1-&gt;3)-D-mannopyranose + N(4)-{alpha-D-Man-(1-&gt;2)-alpha-D-Man-(1-&gt;3)-[alpha-D-Man-(1-&gt;2)-alpha-D-Man-(1-&gt;3)-[alpha-D-Man-(1-&gt;2)-alpha-D-Man-(1-&gt;6)]-alpha-D-Man-(1-&gt;6)]-beta-D-Man-(1-&gt;4)-beta-D-GlaNAc-(1-&gt;4)-beta-D-GlcNAc}-L-asparaginyl-[protein] (N-glucan mannose isomer 8A1,2,3B1,2). The chain is Glycoprotein endo-alpha-1,2-mannosidase (MANEA) from Homo sapiens (Human).